Consider the following 97-residue polypeptide: Putative CC-type chemokine U83 (97 aa).

2 disulfides stabilise this stretch: cysteine 32–cysteine 62 and cysteine 33–cysteine 76.

It belongs to the intercrine beta (chemokine CC) family. Highly divergent.

The sequence is that of Putative CC-type chemokine U83 (U83) from Homo sapiens (Human).